Consider the following 86-residue polypeptide: MFNSVSLPLTIPALNKDSDSKYLFECLLAPSALTVFVVSGGPPGAPPPTQNTPSGLVGLSGLTALRALRQGVPPCGIGPSARRLAL.

This is an uncharacterized protein from Beak and feather disease virus (BFDV).